Reading from the N-terminus, the 59-residue chain is Large ribosomal subunit protein uL30 (59 aa).

The protein belongs to the universal ribosomal protein uL30 family. In terms of assembly, part of the 50S ribosomal subunit.

The sequence is that of Large ribosomal subunit protein uL30 from Lactococcus lactis subsp. lactis (strain IL1403) (Streptococcus lactis).